The primary structure comprises 665 residues: Potassium-transporting ATPase ATP-binding subunit (665 aa).

The next 4 helical transmembrane spans lie at 28–48 (MFLT…PGFF), 56–76 (YLQF…FSSM), 207–227 (IALT…TASI), and 244–264 (IVLL…AIGI). The active-site 4-aspartylphosphate intermediate is Asp295. Residues Asp332, Glu336, 364–371 (FSSETKYS), and Lys382 contribute to the ATP site. Residues Asp501 and Asp505 each contribute to the Mg(2+) site. Helical transmembrane passes span 570 to 590 (YFVI…VNVL), 596 to 616 (IVAV…LIPL), and 644 to 664 (VVVP…LGVV).

The protein belongs to the cation transport ATPase (P-type) (TC 3.A.3) family. Type IA subfamily. As to quaternary structure, the system is composed of three essential subunits: KdpA, KdpB and KdpC.

It is found in the cell membrane. It carries out the reaction K(+)(out) + ATP + H2O = K(+)(in) + ADP + phosphate + H(+). Functionally, part of the high-affinity ATP-driven potassium transport (or Kdp) system, which catalyzes the hydrolysis of ATP coupled with the electrogenic transport of potassium into the cytoplasm. This subunit is responsible for energy coupling to the transport system and for the release of the potassium ions to the cytoplasm. In Thermoplasma acidophilum (strain ATCC 25905 / DSM 1728 / JCM 9062 / NBRC 15155 / AMRC-C165), this protein is Potassium-transporting ATPase ATP-binding subunit.